Reading from the N-terminus, the 161-residue chain is Regulator of ribonuclease activity A (161 aa).

Belongs to the RraA family. As to quaternary structure, homotrimer. Binds to both RNA-binding sites in the C-terminal region of Rne and to RhlB.

Its subcellular location is the cytoplasm. Functionally, globally modulates RNA abundance by binding to RNase E (Rne) and regulating its endonucleolytic activity. Can modulate Rne action in a substrate-dependent manner by altering the composition of the degradosome. Modulates RNA-binding and helicase activities of the degradosome. The polypeptide is Regulator of ribonuclease activity A (Edwardsiella ictaluri (strain 93-146)).